Consider the following 93-residue polypeptide: Small ribosomal subunit protein uS19 (93 aa).

This sequence belongs to the universal ribosomal protein uS19 family.

Protein S19 forms a complex with S13 that binds strongly to the 16S ribosomal RNA. The sequence is that of Small ribosomal subunit protein uS19 from Helicobacter pylori (strain G27).